The chain runs to 294 residues: Probable 2-(5''-triphosphoribosyl)-3'-dephosphocoenzyme-A synthase (294 aa).

It belongs to the CitG/MdcB family.

It carries out the reaction 3'-dephospho-CoA + ATP = 2'-(5''-triphospho-alpha-D-ribosyl)-3'-dephospho-CoA + adenine. The protein is Probable 2-(5''-triphosphoribosyl)-3'-dephosphocoenzyme-A synthase of Streptococcus pyogenes serotype M2 (strain MGAS10270).